Consider the following 364-residue polypeptide: DNA polymerase IV (364 aa).

A UmuC domain is found at 14–198 (IIHIDMDAFF…LPVEKFHGVG (185 aa)). Mg(2+)-binding residues include Asp-18 and Asp-116. Glu-117 is a catalytic residue.

This sequence belongs to the DNA polymerase type-Y family. In terms of assembly, monomer. The cofactor is Mg(2+).

The protein resides in the cytoplasm. It catalyses the reaction DNA(n) + a 2'-deoxyribonucleoside 5'-triphosphate = DNA(n+1) + diphosphate. Poorly processive, error-prone DNA polymerase involved in untargeted mutagenesis. Copies undamaged DNA at stalled replication forks, which arise in vivo from mismatched or misaligned primer ends. These misaligned primers can be extended by PolIV. Exhibits no 3'-5' exonuclease (proofreading) activity. May be involved in translesional synthesis, in conjunction with the beta clamp from PolIII. The chain is DNA polymerase IV from Lactococcus lactis subsp. cremoris (strain MG1363).